A 704-amino-acid polypeptide reads, in one-letter code: DNA ligase (704 aa).

NAD(+) contacts are provided by residues 43–47 (DADYD), 92–93 (SL), and E124. K126 functions as the N6-AMP-lysine intermediate in the catalytic mechanism. Positions 147, 182, 298, and 322 each coordinate NAD(+). Positions 427, 430, 445, and 451 each coordinate Zn(2+). Residues 625–704 (PVESPIAGKI…DAWLRLIGDA (80 aa)) form the BRCT domain.

It belongs to the NAD-dependent DNA ligase family. LigA subfamily. It depends on Mg(2+) as a cofactor. The cofactor is Mn(2+).

The catalysed reaction is NAD(+) + (deoxyribonucleotide)n-3'-hydroxyl + 5'-phospho-(deoxyribonucleotide)m = (deoxyribonucleotide)n+m + AMP + beta-nicotinamide D-nucleotide.. Its function is as follows. DNA ligase that catalyzes the formation of phosphodiester linkages between 5'-phosphoryl and 3'-hydroxyl groups in double-stranded DNA using NAD as a coenzyme and as the energy source for the reaction. It is essential for DNA replication and repair of damaged DNA. The sequence is that of DNA ligase from Cereibacter sphaeroides (strain ATCC 17025 / ATH 2.4.3) (Rhodobacter sphaeroides).